A 541-amino-acid chain; its full sequence is 2-succinyl-5-enolpyruvyl-6-hydroxy-3-cyclohexene-1-carboxylate synthase (541 aa).

Belongs to the TPP enzyme family. MenD subfamily. In terms of assembly, homodimer. The cofactor is Mg(2+). Requires Mn(2+) as cofactor. Thiamine diphosphate is required as a cofactor.

It catalyses the reaction isochorismate + 2-oxoglutarate + H(+) = 5-enolpyruvoyl-6-hydroxy-2-succinyl-cyclohex-3-ene-1-carboxylate + CO2. Its pathway is quinol/quinone metabolism; 1,4-dihydroxy-2-naphthoate biosynthesis; 1,4-dihydroxy-2-naphthoate from chorismate: step 2/7. It participates in quinol/quinone metabolism; menaquinone biosynthesis. In terms of biological role, catalyzes the thiamine diphosphate-dependent decarboxylation of 2-oxoglutarate and the subsequent addition of the resulting succinic semialdehyde-thiamine pyrophosphate anion to isochorismate to yield 2-succinyl-5-enolpyruvyl-6-hydroxy-3-cyclohexene-1-carboxylate (SEPHCHC). The protein is 2-succinyl-5-enolpyruvyl-6-hydroxy-3-cyclohexene-1-carboxylate synthase of Rhodococcus opacus (strain B4).